The primary structure comprises 366 residues: 1-deoxy-D-xylulose 5-phosphate reductoisomerase (366 aa).

The NADPH site is built by threonine 7, glycine 8, serine 9, isoleucine 10, glycine 31, lysine 32, asparagine 33, and asparagine 113. Residue lysine 114 coordinates 1-deoxy-D-xylulose 5-phosphate. Glutamate 115 is an NADPH binding site. Aspartate 133 contacts Mn(2+). 4 residues coordinate 1-deoxy-D-xylulose 5-phosphate: serine 134, glutamate 135, serine 158, and histidine 181. Glutamate 135 serves as a coordination point for Mn(2+). Residue glycine 187 participates in NADPH binding. Residues serine 194, asparagine 199, lysine 200, and glutamate 203 each contribute to the 1-deoxy-D-xylulose 5-phosphate site. Mn(2+) is bound at residue glutamate 203.

The protein belongs to the DXR family. Mg(2+) serves as cofactor. Mn(2+) is required as a cofactor.

It catalyses the reaction 2-C-methyl-D-erythritol 4-phosphate + NADP(+) = 1-deoxy-D-xylulose 5-phosphate + NADPH + H(+). Its pathway is isoprenoid biosynthesis; isopentenyl diphosphate biosynthesis via DXP pathway; isopentenyl diphosphate from 1-deoxy-D-xylulose 5-phosphate: step 1/6. Functionally, catalyzes the NADPH-dependent rearrangement and reduction of 1-deoxy-D-xylulose-5-phosphate (DXP) to 2-C-methyl-D-erythritol 4-phosphate (MEP). This Helicobacter pylori (strain G27) protein is 1-deoxy-D-xylulose 5-phosphate reductoisomerase.